The chain runs to 522 residues: Glutathione reductase, mitochondrial (522 aa).

The N-terminal 43 residues, 1–43, are a transit peptide targeting the mitochondrion; that stretch reads MALLPRALSAGAGPSWRRAARAFRGFLLLLPEPAALTRALSRA. Positions 74 and 75 each coordinate FAD. Ser-74 provides a ligand contact to glutathione. Residue Arg-81 participates in glutathione binding. FAD is bound at residue Glu-94. The residue at position 97 (Lys-97) is an N6-acetyllysine. Residues Thr-101, Cys-102, and Lys-110 each contribute to the FAD site. Cys-102 and Cys-107 form a disulfide bridge. Glutathione is bound at residue Tyr-158. Ala-174 contributes to the FAD binding site. 6 residues coordinate NADP(+): Ala-239, Ile-242, Glu-245, Arg-262, Arg-268, and Gly-334. Residue Asp-375 coordinates FAD. Residue Leu-381 coordinates NADP(+). FAD is bound at residue Thr-383. Arg-391 contributes to the glutathione binding site. Val-414 is a binding site for NADP(+). His-511 is an FAD binding site. His-511 (proton acceptor) is an active-site residue.

This sequence belongs to the class-I pyridine nucleotide-disulfide oxidoreductase family. As to quaternary structure, homodimer; disulfide-linked. FAD serves as cofactor.

It localises to the mitochondrion. Its subcellular location is the cytoplasm. The catalysed reaction is 2 glutathione + NADP(+) = glutathione disulfide + NADPH + H(+). In terms of biological role, catalyzes the reduction of glutathione disulfide (GSSG) to reduced glutathione (GSH). Constitutes the major mechanism to maintain a high GSH:GSSG ratio in the cytosol. The sequence is that of Glutathione reductase, mitochondrial (GSR) from Homo sapiens (Human).